Consider the following 425-residue polypeptide: Isocitrate dehydrogenase [NADP] (425 aa).

T114 provides a ligand contact to NADP(+). Residues S123, N125, R129, R139, and R162 each coordinate D-threo-isocitrate. Position 316 (D316) interacts with Mg(2+). Residues 348–354 (HGTAPKY), N361, Y400, and R404 contribute to the NADP(+) site.

Belongs to the isocitrate and isopropylmalate dehydrogenases family. Homodimer. Mg(2+) serves as cofactor. It depends on Mn(2+) as a cofactor.

The catalysed reaction is D-threo-isocitrate + NADP(+) = 2-oxoglutarate + CO2 + NADPH. Catalyzes the oxidative decarboxylation of isocitrate to 2-oxoglutarate and carbon dioxide with the concomitant reduction of NADP(+). The sequence is that of Isocitrate dehydrogenase [NADP] (icd) from Helicobacter pylori (strain ATCC 700392 / 26695) (Campylobacter pylori).